A 288-amino-acid chain; its full sequence is ATP synthase gamma chain (288 aa).

Belongs to the ATPase gamma chain family. As to quaternary structure, F-type ATPases have 2 components, CF(1) - the catalytic core - and CF(0) - the membrane proton channel. CF(1) has five subunits: alpha(3), beta(3), gamma(1), delta(1), epsilon(1). CF(0) has three main subunits: a, b and c.

The protein localises to the cell inner membrane. Produces ATP from ADP in the presence of a proton gradient across the membrane. The gamma chain is believed to be important in regulating ATPase activity and the flow of protons through the CF(0) complex. This Rickettsia typhi (strain ATCC VR-144 / Wilmington) protein is ATP synthase gamma chain.